Reading from the N-terminus, the 182-residue chain is MSRIGRQPITVPAGVEVEIDGSTVKVKGPKGQLVKEMHRDMIIKYEDGRLIVERPANDKLHKSLHGLTRTLLNNMVVGVTAGFQKNLELVGVGYRASKQGNKLVLAVGYSHPVEIEPEAGLEIEVPAPTKISIKGVDKEKVGALAAAIRAVRQPEPYKGKGIKYEGEKIRRKVGKAGGKGKK.

Belongs to the universal ribosomal protein uL6 family. In terms of assembly, part of the 50S ribosomal subunit.

Its function is as follows. This protein binds to the 23S rRNA, and is important in its secondary structure. It is located near the subunit interface in the base of the L7/L12 stalk, and near the tRNA binding site of the peptidyltransferase center. This Pelotomaculum thermopropionicum (strain DSM 13744 / JCM 10971 / SI) protein is Large ribosomal subunit protein uL6.